The following is a 248-amino-acid chain: PF03932 family protein CutC (248 aa).

Belongs to the CutC family. Homodimer.

It localises to the cytoplasm. This chain is PF03932 family protein CutC, found in Escherichia coli (strain 55989 / EAEC).